We begin with the raw amino-acid sequence, 508 residues long: Maturase K (508 aa).

It belongs to the intron maturase 2 family. MatK subfamily.

The protein resides in the plastid. Its subcellular location is the chloroplast. Its function is as follows. Usually encoded in the trnK tRNA gene intron. Probably assists in splicing its own and other chloroplast group II introns. The sequence is that of Maturase K from Ranunculus glacialis (Glacier buttercup).